The chain runs to 2245 residues: Myosin-J heavy chain (2245 aa).

Positions 25 to 77 (QEGAGVWIPDQELGWIGADVIEHSETSADQVLVRTEDDREVKIPLSKVFQKNP) constitute a Myosin N-terminal SH3-like domain. Residues 81 to 821 (EGVDDLSFLS…QLASLEDMRL (741 aa)) enclose the Myosin motor domain. 174 to 181 (GESGAGKT) contributes to the ATP binding site. The tract at residues 646 to 672 (FTQSPGGHPQGNGGPTSSNTKGTSGSS) is disordered. Positions 660-672 (PTSSNTKGTSGSS) are enriched in low complexity. Positions 669-749 (SGSSSMKFLS…GFPTRRLLSE (81 aa)) are actin-binding. IQ domains are found at residues 824–851 (LDRS…RDAS), 872–901 (RTHS…ASLQ), and 943–972 (KLRG…EARS). A coiled-coil region spans residues 973 to 1812 (LRTVQEQKNK…NYHMLEDRME (840 aa)). The interval 1504 to 1524 (KKQLTQLQQQHEQSSTQLLLA) is disordered. Low complexity predominate over residues 1506–1523 (QLTQLQQQHEQSSTQLLL). The Dilute domain maps to 1969-2188 (IDFIDQLQQS…IASICPPNKS (220 aa)).

It belongs to the TRAFAC class myosin-kinesin ATPase superfamily. Myosin family. As to quaternary structure, homodimer that associates with six light chains.

It localises to the contractile vacuole. In terms of biological role, processive motor protein that can move over long distances along F-actin without disassociating; processiveness depends on high physiological Mg(2+) concentrations. Presents a high actin affinity in the presence of ADP, fast ATP hydrolysis, and a high steady-state ATPase activity in the presence of actin that is rate limited by ADP release. Physiological decrease of free Mg(2+) ions leads to an increased rate of ADP release and shortening of the fraction of time it spends in the strong acting binding states. The protein is Myosin-J heavy chain (myoJ) of Dictyostelium discoideum (Social amoeba).